The primary structure comprises 152 residues: Large ribosomal subunit protein bL9 (152 aa).

This sequence belongs to the bacterial ribosomal protein bL9 family.

Its function is as follows. Binds to the 23S rRNA. The protein is Large ribosomal subunit protein bL9 of Parasynechococcus marenigrum (strain WH8102).